The sequence spans 192 residues: Ribosomal RNA small subunit methyltransferase G (192 aa).

S-adenosyl-L-methionine is bound by residues G63, F68, 112-113, and R125; that span reads IE.

The protein belongs to the methyltransferase superfamily. RNA methyltransferase RsmG family.

The protein resides in the cytoplasm. It catalyses the reaction guanosine(527) in 16S rRNA + S-adenosyl-L-methionine = N(7)-methylguanosine(527) in 16S rRNA + S-adenosyl-L-homocysteine. Specifically methylates the N7 position of guanine in position 527 of 16S rRNA. This is Ribosomal RNA small subunit methyltransferase G from Rickettsia felis (strain ATCC VR-1525 / URRWXCal2) (Rickettsia azadi).